The sequence spans 723 residues: PX domain-containing protein EREL1 (723 aa).

Positions 1-12 are enriched in basic residues; the sequence is MMQRRSPPKHRH. The interval 1 to 26 is disordered; the sequence is MMQRRSPPKHRHDGTSPLPLGMDWSP. One can recognise a PX domain in the interval 48-165; the sequence is YCVTIPSWIV…SFLELEAAAR (118 aa). 2 disordered regions span residues 169-193 and 209-230; these read QDVDQNASDSNNDRSSTSSSPMVHP and YGSDTAYETSEVGSPSVGQDDI. Low complexity predominate over residues 172–193; it reads DQNASDSNNDRSSTSSSPMVHP. Polar residues predominate over residues 209–225; the sequence is YGSDTAYETSEVGSPSV. 2 coiled-coil regions span residues 401–474 and 503–555; these read NERL…LRQK and KHVL…LEKE. Positions 698 to 723 are disordered; it reads DVKTTEDVNEENSDEKDEASRETLKR. Residues 704-714 are compositionally biased toward acidic residues; that stretch reads DVNEENSDEKD.

Its subcellular location is the cytoplasm. It localises to the cytosol. The protein localises to the endosome membrane. Its function is as follows. Acts as an effector of RABF2A and RABF2B. Involved in vacuolar transport of storage proteins. Regulates membrane trafficking to protein storage vacuoles (PSVs). Binds specifically to phosphatidylinositol 3-monophosphate (PtdIns3P). The polypeptide is PX domain-containing protein EREL1 (Arabidopsis thaliana (Mouse-ear cress)).